The primary structure comprises 278 residues: Odontogenic ameloblast-associated protein (278 aa).

The first 15 residues, 1-15 (MKIIILLGLIGATSS), serve as a signal peptide directing secretion. The segment at 103-124 (GGQAGQPDFSQQQTPSQTQQAS) is disordered. The span at 107–124 (GQPDFSQQQTPSQTQQAS) shows a compositional bias: low complexity. O-linked (GalNAc...) threonine glycosylation is found at threonine 116 and threonine 120. Positions 126-128 (MSY) are interaction with ARHGEF5. The interval 230 to 278 (GFKQDNVGVSTPSTSPKPDTGNFFTSEINPTIAPLLPEQKVNADSLREP) is disordered. The segment covering 236-258 (VGVSTPSTSPKPDTGNFFTSEIN) has biased composition (polar residues). O-linked (GalNAc...) threonine glycans are attached at residues threonine 240, threonine 243, threonine 249, and threonine 254.

It belongs to the ODAM family. In terms of assembly, interacts (via C-terminus) with ARHGEF5. O-glycosylated. In terms of tissue distribution, highly expressed in tooth-associated epithelia. In tooth, it is only detected in the ameloblast layer of the enamel organ, starting at post-secretory transition and extending throughout the maturation stage. Also detected in epithelial cells of the gingiva which bind it to the tooth surface (junctional epithelium) (at protein level). Predominantly expressed in mandible, but also expressed at weak level in nasal and salivary glands, and at much lower level in epididymis.

The protein resides in the secreted. The protein localises to the cytoplasm. It is found in the nucleus. Functionally, tooth-associated epithelia protein that probably plays a role in odontogenesis, the complex process that results in the initiation and generation of the tooth. May be incorporated in the enamel matrix at the end of mineralization process. Involved in the induction of RHOA activity via interaction with ARHGEF and expression of downstream factors such as ROCK. Plays a role in attachment of the junctional epithelium to the tooth surface. This is Odontogenic ameloblast-associated protein (Odam) from Rattus norvegicus (Rat).